A 483-amino-acid chain; its full sequence is UDP-N-acetylmuramoyl-L-alanyl-D-glutamate--2,6-diaminopimelate ligase (483 aa).

Ser-30 contacts UDP-N-acetyl-alpha-D-muramoyl-L-alanyl-D-glutamate. Position 109-115 (109-115 (GTNGKTT)) interacts with ATP. Residues 151–152 (TT), Ser-178, and Arg-186 each bind UDP-N-acetyl-alpha-D-muramoyl-L-alanyl-D-glutamate. The residue at position 218 (Lys-218) is an N6-carboxylysine. Residues Arg-380, 403–406 (DNPR), Gly-453, and Glu-457 each bind meso-2,6-diaminopimelate. The Meso-diaminopimelate recognition motif signature appears at 403-406 (DNPR).

The protein belongs to the MurCDEF family. MurE subfamily. The cofactor is Mg(2+). Post-translationally, carboxylation is probably crucial for Mg(2+) binding and, consequently, for the gamma-phosphate positioning of ATP.

It localises to the cytoplasm. It carries out the reaction UDP-N-acetyl-alpha-D-muramoyl-L-alanyl-D-glutamate + meso-2,6-diaminopimelate + ATP = UDP-N-acetyl-alpha-D-muramoyl-L-alanyl-gamma-D-glutamyl-meso-2,6-diaminopimelate + ADP + phosphate + H(+). It functions in the pathway cell wall biogenesis; peptidoglycan biosynthesis. Its function is as follows. Catalyzes the addition of meso-diaminopimelic acid to the nucleotide precursor UDP-N-acetylmuramoyl-L-alanyl-D-glutamate (UMAG) in the biosynthesis of bacterial cell-wall peptidoglycan. The chain is UDP-N-acetylmuramoyl-L-alanyl-D-glutamate--2,6-diaminopimelate ligase from Chlamydia pneumoniae (Chlamydophila pneumoniae).